The chain runs to 44 residues: MVHYEVVQYLMDCCGITYNQAVQALRSNDWDLWQAEVAIRSNKM.

This is an uncharacterized protein from Escherichia coli (strain K12).